The sequence spans 364 residues: Methylthioribose-1-phosphate isomerase (364 aa).

Residues 53 to 55 (RGA), arginine 90, and glutamine 203 each bind substrate. The active-site Proton donor is the aspartate 244. 254-255 (NK) provides a ligand contact to substrate.

It belongs to the eIF-2B alpha/beta/delta subunits family. MtnA subfamily.

The catalysed reaction is 5-(methylsulfanyl)-alpha-D-ribose 1-phosphate = 5-(methylsulfanyl)-D-ribulose 1-phosphate. It functions in the pathway amino-acid biosynthesis; L-methionine biosynthesis via salvage pathway; L-methionine from S-methyl-5-thio-alpha-D-ribose 1-phosphate: step 1/6. In terms of biological role, catalyzes the interconversion of methylthioribose-1-phosphate (MTR-1-P) into methylthioribulose-1-phosphate (MTRu-1-P). In Sinorhizobium medicae (strain WSM419) (Ensifer medicae), this protein is Methylthioribose-1-phosphate isomerase.